Reading from the N-terminus, the 282-residue chain is DegV domain-containing protein SPy_0865/M5005_Spy0672 (282 aa).

The region spanning 3-280 is the DegV domain; the sequence is LAVITDSTAT…EGAIAFGVTP (278 aa). Hexadecanoate is bound by residues T61 and S94.

Functionally, may bind long-chain fatty acids, such as palmitate, and may play a role in lipid transport or fatty acid metabolism. This is DegV domain-containing protein SPy_0865/M5005_Spy0672 from Streptococcus pyogenes serotype M1.